The sequence spans 548 residues: BTB/POZ domain-containing protein At5g17580 (548 aa).

One can recognise a BTB domain in the interval Ser7 to Ser74. The 263-residue stretch at Asp180–Gln442 folds into the NPH3 domain. Tyr383 carries the post-translational modification Phosphotyrosine. Positions Gln442–Val493 form a coiled coil.

Belongs to the NPH3 family.

Its pathway is protein modification; protein ubiquitination. Its function is as follows. May act as a substrate-specific adapter of an E3 ubiquitin-protein ligase complex (CUL3-RBX1-BTB) which mediates the ubiquitination and subsequent proteasomal degradation of target proteins. In Arabidopsis thaliana (Mouse-ear cress), this protein is BTB/POZ domain-containing protein At5g17580.